Consider the following 148-residue polypeptide: Large ribosomal subunit protein bL19 (148 aa).

This sequence belongs to the bacterial ribosomal protein bL19 family.

Functionally, this protein is located at the 30S-50S ribosomal subunit interface and may play a role in the structure and function of the aminoacyl-tRNA binding site. This chain is Large ribosomal subunit protein bL19, found in Beijerinckia indica subsp. indica (strain ATCC 9039 / DSM 1715 / NCIMB 8712).